Reading from the N-terminus, the 142-residue chain is MCHAAPARPGDGRGLPRAGDNFSGAARSKPVGAAFEQRARQFLERRGLVFVAANVTMRGGELDLVMREPDGMLVFVEVRARRSARHGGAAASVGWRKRRRLVAAALQFWARHGAGAACRFDVVAFEAGQLAWLRDAFRADDA.

Residues 1–27 (MCHAAPARPGDGRGLPRAGDNFSGAAR) are disordered.

This sequence belongs to the UPF0102 family.

This Burkholderia lata (strain ATCC 17760 / DSM 23089 / LMG 22485 / NCIMB 9086 / R18194 / 383) protein is UPF0102 protein Bcep18194_A3391.